Reading from the N-terminus, the 282-residue chain is MEMO1 family protein Msm_1438 (282 aa).

Belongs to the MEMO1 family.

The polypeptide is MEMO1 family protein Msm_1438 (Methanobrevibacter smithii (strain ATCC 35061 / DSM 861 / OCM 144 / PS)).